Consider the following 459-residue polypeptide: Cysteine--tRNA ligase (459 aa).

Cys31 lines the Zn(2+) pocket. The short motif at 33-43 (PTVYDNPHIGN) is the 'HIGH' region element. Positions 216, 241, and 245 each coordinate Zn(2+). The 'KMSKS' region signature appears at 274–278 (KMSKS). Lys277 provides a ligand contact to ATP.

The protein belongs to the class-I aminoacyl-tRNA synthetase family. As to quaternary structure, monomer. Zn(2+) is required as a cofactor.

Its subcellular location is the cytoplasm. It catalyses the reaction tRNA(Cys) + L-cysteine + ATP = L-cysteinyl-tRNA(Cys) + AMP + diphosphate. The sequence is that of Cysteine--tRNA ligase from Rickettsia felis (strain ATCC VR-1525 / URRWXCal2) (Rickettsia azadi).